The chain runs to 404 residues: S-adenosylmethionine synthase (404 aa).

ATP is bound at residue H17. Mg(2+) is bound at residue D19. Residue E45 coordinates K(+). 2 residues coordinate L-methionine: E58 and Q101. The tract at residues 101–111 (QSPDINRGVDR) is flexible loop. ATP is bound by residues 172-174 (DAK), 246-247 (RF), D255, 261-262 (RK), A278, and K282. D255 serves as a coordination point for L-methionine. K286 is an L-methionine binding site.

It belongs to the AdoMet synthase family. In terms of assembly, homotetramer; dimer of dimers. Mg(2+) serves as cofactor. K(+) is required as a cofactor.

It localises to the cytoplasm. The catalysed reaction is L-methionine + ATP + H2O = S-adenosyl-L-methionine + phosphate + diphosphate. It participates in amino-acid biosynthesis; S-adenosyl-L-methionine biosynthesis; S-adenosyl-L-methionine from L-methionine: step 1/1. Catalyzes the formation of S-adenosylmethionine (AdoMet) from methionine and ATP. The overall synthetic reaction is composed of two sequential steps, AdoMet formation and the subsequent tripolyphosphate hydrolysis which occurs prior to release of AdoMet from the enzyme. This is S-adenosylmethionine synthase from Chlorobaculum tepidum (strain ATCC 49652 / DSM 12025 / NBRC 103806 / TLS) (Chlorobium tepidum).